The chain runs to 362 residues: C-C chemokine receptor type 10 (362 aa).

Residues 1–48 are Extracellular-facing; it reads MGTKPTEQVSWGLYSGYDEEAYSVGPLPELCYKADVQAFSRAFQPSVS. Residues 49 to 69 traverse the membrane as a helical segment; sequence LMVAVLGLAGNGLVLATHLAA. The Cytoplasmic portion of the chain corresponds to 70–80; sequence RRTTRSPTSVH. A helical membrane pass occupies residues 81 to 101; the sequence is LLQLALADLLLALTLPFAAAG. At 102–115 the chain is on the extracellular side; the sequence is ALQGWNLGSTTCRA. Cysteine 113 and cysteine 191 are disulfide-bonded. The chain crosses the membrane as a helical span at residues 116-136; sequence ISGLYSASFHAGFLFLACISA. Residues 137–159 lie on the Cytoplasmic side of the membrane; sequence DRYVAIARALPAGQRPSTPSRAH. A helical transmembrane segment spans residues 160 to 180; sequence LVSVFVWLLSLFLALPALLFS. The Extracellular portion of the chain corresponds to 181 to 208; the sequence is RDGPREGQRRCRLIFPESLTQTVKGASA. The chain crosses the membrane as a helical span at residues 209–229; that stretch reads VAQVVLGFALPLGVMAACYAL. At 230–247 the chain is on the cytoplasmic side; sequence LGRTLLAARGPERRRALR. Residues 248 to 268 traverse the membrane as a helical segment; sequence VVVALVVAFVVLQLPYSLALL. Over 269-291 the chain is Extracellular; that stretch reads LDTADLLAARERSCSSSKRKDLA. The helical transmembrane segment at 292–312 threads the bilayer; it reads LLVTGGLTLVRCSLNPVLYAF. At 313-362 the chain is on the cytoplasmic side; the sequence is LGLRFRRDLRRLLQGGGCSPKPNPRGRCPRRLRLSSCSAPTETHSLSWDN.

The protein belongs to the G-protein coupled receptor 1 family. In terms of tissue distribution, expressed at high levels in small intestine, colon, lymph nodes, Peyer patches and at lower levels in thymus, lung and spleen.

It is found in the cell membrane. Functionally, receptor for chemokines SCYA27 and SCYA28. Subsequently transduces a signal by increasing the intracellular calcium ions level. In Mus musculus (Mouse), this protein is C-C chemokine receptor type 10 (Ccr10).